The primary structure comprises 126 residues: Holo-[acyl-carrier-protein] synthase (126 aa).

Mg(2+) contacts are provided by D9 and E58.

The protein belongs to the P-Pant transferase superfamily. AcpS family. Requires Mg(2+) as cofactor.

It localises to the cytoplasm. The enzyme catalyses apo-[ACP] + CoA = holo-[ACP] + adenosine 3',5'-bisphosphate + H(+). Its function is as follows. Transfers the 4'-phosphopantetheine moiety from coenzyme A to a Ser of acyl-carrier-protein. The sequence is that of Holo-[acyl-carrier-protein] synthase from Photobacterium profundum (strain SS9).